The following is a 245-amino-acid chain: 23S rRNA (guanosine-2'-O-)-methyltransferase RlmB (245 aa).

Residues glycine 197, isoleucine 217, and leucine 226 each coordinate S-adenosyl-L-methionine.

This sequence belongs to the class IV-like SAM-binding methyltransferase superfamily. RNA methyltransferase TrmH family. RlmB subfamily.

It localises to the cytoplasm. It carries out the reaction guanosine(2251) in 23S rRNA + S-adenosyl-L-methionine = 2'-O-methylguanosine(2251) in 23S rRNA + S-adenosyl-L-homocysteine + H(+). Functionally, specifically methylates the ribose of guanosine 2251 in 23S rRNA. This chain is 23S rRNA (guanosine-2'-O-)-methyltransferase RlmB, found in Bordetella parapertussis (strain 12822 / ATCC BAA-587 / NCTC 13253).